A 360-amino-acid chain; its full sequence is Histidinol-phosphate aminotransferase (360 aa).

Lys-223 carries the N6-(pyridoxal phosphate)lysine modification.

The protein belongs to the class-II pyridoxal-phosphate-dependent aminotransferase family. Histidinol-phosphate aminotransferase subfamily. In terms of assembly, homodimer. Pyridoxal 5'-phosphate is required as a cofactor.

It catalyses the reaction L-histidinol phosphate + 2-oxoglutarate = 3-(imidazol-4-yl)-2-oxopropyl phosphate + L-glutamate. It participates in amino-acid biosynthesis; L-histidine biosynthesis; L-histidine from 5-phospho-alpha-D-ribose 1-diphosphate: step 7/9. The sequence is that of Histidinol-phosphate aminotransferase from Bacillus subtilis subsp. natto.